The chain runs to 145 residues: Large ribosomal subunit protein uL11 (145 aa).

This sequence belongs to the universal ribosomal protein uL11 family. Part of the ribosomal stalk of the 50S ribosomal subunit. Interacts with L10 and the large rRNA to form the base of the stalk. L10 forms an elongated spine to which L12 dimers bind in a sequential fashion forming a multimeric L10(L12)X complex. One or more lysine residues are methylated.

Functionally, forms part of the ribosomal stalk which helps the ribosome interact with GTP-bound translation factors. The polypeptide is Large ribosomal subunit protein uL11 (Rickettsia massiliae (strain Mtu5)).